Here is a 1197-residue protein sequence, read N- to C-terminus: MKKNNTILYYGCAAQARYASSNHGLLYSPSQAHLFNFSLARTYLNFSNGFRAFSSERKRQNSWKLSVRSIYMDSVNFTKHDFINALLKNFKQGNVYTVLVKVEYLDSSGNRAWCMLNVQKGIIYRNKSDFIELVKEFFDEVYIGYIEYMSRYHAQEVLSIQIMYILNNDSYRQYSLKNINKEKLDKNLVNVKQTKLDFSESLLPLTTNEKFYGKRLTPILDYKKQFVTSLYINGINFIKLVNKKSKDLNQEFINFDSKTRFYRYKLNEIEYIITVSNISKTETVKTIYLMTGFKFKDNILDKELTTKIFSRQIGNTTIEFDGADIINKEIKLKLPIIRLNYKPFTDLNSRIGTFDLETFRDYNSNSAVYALGFSTLSMSKTDKKTSMYYLTKDGNTSHEIIIKCINEMLSSDYRDHIYFTHNLGGYDIIFILHALKLENKIILENKLKGINTIVEDDKKIKVKKKKPISDVNKKSQNKDHYEISTILRDDRILKCVIKVKTPSGYNKITFIDSYNILPDKLDNLAKSFGTEIQKGLFPYEFVKSNTLNYVGITPSIEYYKINNEVISQELYNELIVPQWDLRKQTLHYLERDLLSLLEIINTYNHYVYKRYNVQLTESLTIARLALNIYLKRYLGDNLIPVVLNNSLFTSIKAAYYGGVAEVYRPYGKNLRYYDVNSLYPFVAKNTMPGHECKYIESKKGLKLSELFGFFYCKVTTNNQYLGLLPVHNQGLIMPNGQWYGWYFSEELKFAEVNGYNIEVIKGYQFNKIDNLFSSYVDDLYKIKANSEGSEKLITKFLLNSLLGRFGMSIFKLKTDIVSVEKAKKLAVTNYINSVKAISDTDVLISYNKEISRKLVEEHGLNYIEILNSNSKLDLEKNNSFKDVAVSISAAVTAYARIFMAQTKLDILKNGGNLYYTDTDSIVTDIDLPDNLVGSELGQFKLEFKLKEGFFISAKTYCLILEKEYIKKNKNKDTVIKAKGVFKTSLDVEKFKSLYFNKQDVEAIKSNNKTNYLEGYVNIESGIVKLKHDAYTKRSKIYDNNGLWIDTKPLNYQVSNMLEDTNSKPLNSPNNNDLCALIKYNKPCFDLIKYNKSITDLILYLPTNKAKFINYAQLESMINEAIHESDMRVANHIKMLIYSLTGILYHGKDGTMYIYSPNSKKIYIKYKKNNKWVTFWNIKYHNGYVYIKNKNKFYLYKG.

It belongs to the DNA polymerase type-B family.

It is found in the mitochondrion. The catalysed reaction is DNA(n) + a 2'-deoxyribonucleoside 5'-triphosphate = DNA(n+1) + diphosphate. The sequence is that of Probable DNA polymerase from Podospora anserina (Pleurage anserina).